A 466-amino-acid chain; its full sequence is MGKLLYHKIYDSHVIHEDTNDDPILYIDRHLLHEVTSPQAFESIRFKNRKIRRPNKTFATMDHNVPTIMQNIHSIEGMSKIQLNQLTKNCKDFNITLFDLSHPHQGIIHVLAPEQGIILPGMTVVCGDSHTSTHGAFGALSFGIGTSEIEHVLVTQTLRQPKYKSMGINLFGTIPPYITAKDLILFIIGKIGHGGASGYIVEFYGDVINTLSMEERMTICNMSIEMGAASALIAPDVTTYNYLKNKKFSPNKTHWNQALLFWNTLHSDHDTNFDKIFNFDISNIKPQITWGTNPSQVISIDQPIPKLEIFTDPIERKSVIQALNYMKLTPNTYLTNISIDKVFIGSCTNSRIEDLRSAANIIKDHKISNNVHAIVVPGSKPVKKQAEKEGLDSIFIKAGFEWRLPGCSMCLGMNEDRLNAGERCASTSNRNFEGRQGRGGLTHLVSPAMAAAAAIAGHFVDIRTYF.

Residues Cys347, Cys407, and Cys410 each contribute to the [4Fe-4S] cluster site.

This sequence belongs to the aconitase/IPM isomerase family. LeuC type 1 subfamily. In terms of assembly, heterodimer of LeuC and LeuD. Requires [4Fe-4S] cluster as cofactor.

The catalysed reaction is (2R,3S)-3-isopropylmalate = (2S)-2-isopropylmalate. It participates in amino-acid biosynthesis; L-leucine biosynthesis; L-leucine from 3-methyl-2-oxobutanoate: step 2/4. Functionally, catalyzes the isomerization between 2-isopropylmalate and 3-isopropylmalate, via the formation of 2-isopropylmaleate. In Blochmanniella floridana, this protein is 3-isopropylmalate dehydratase large subunit.